Here is a 213-residue protein sequence, read N- to C-terminus: Large ribosomal subunit protein uL3 (213 aa).

The tract at residues 135-155 (THGSKNHRLPGSTGAGTTPGR) is disordered.

Belongs to the universal ribosomal protein uL3 family. Part of the 50S ribosomal subunit. Forms a cluster with proteins L14 and L19.

One of the primary rRNA binding proteins, it binds directly near the 3'-end of the 23S rRNA, where it nucleates assembly of the 50S subunit. This is Large ribosomal subunit protein uL3 from Synechocystis sp. (strain ATCC 27184 / PCC 6803 / Kazusa).